The sequence spans 412 residues: L-threonine:uridine-5'-aldehyde transaldolase (412 aa).

An N6-(pyridoxal phosphate)lysine modification is found at lysine 229.

It belongs to the SHMT family. It depends on pyridoxal 5'-phosphate as a cofactor.

It catalyses the reaction uridine-5'-aldehyde + L-threonine = (5'S,6'S)-C-glycyluridine + acetaldehyde. It participates in antibiotic biosynthesis. Transaldolase involved in the biosynthesis of the capuramycin-type nucleoside antibiotic A-503083. Catalyzes the condensation of L-threonine and uridine-5'-aldehyde to form 5'-C-glycyluridine (GlyU). Forms (5'S,6'S)-GlyU. The sequence is that of L-threonine:uridine-5'-aldehyde transaldolase from Streptomyces sp.